Consider the following 311-residue polypeptide: tRNA-cytidine(32) 2-sulfurtransferase (311 aa).

Residues 47 to 52 (SGGKDS) carry the PP-loop motif motif. The [4Fe-4S] cluster site is built by C122, C125, and C213.

This sequence belongs to the TtcA family. In terms of assembly, homodimer. The cofactor is Mg(2+). Requires [4Fe-4S] cluster as cofactor.

The protein localises to the cytoplasm. It carries out the reaction cytidine(32) in tRNA + S-sulfanyl-L-cysteinyl-[cysteine desulfurase] + AH2 + ATP = 2-thiocytidine(32) in tRNA + L-cysteinyl-[cysteine desulfurase] + A + AMP + diphosphate + H(+). The protein operates within tRNA modification. Its function is as follows. Catalyzes the ATP-dependent 2-thiolation of cytidine in position 32 of tRNA, to form 2-thiocytidine (s(2)C32). The sulfur atoms are provided by the cysteine/cysteine desulfurase (IscS) system. This chain is tRNA-cytidine(32) 2-sulfurtransferase, found in Salmonella choleraesuis (strain SC-B67).